Consider the following 80-residue polypeptide: MAITKTSVTLLLLIIMAASLSNFSVLASEIKPTGRVDNQCKEMCSATFGDGKCAADCRKAGFSSGRCLTSSPFGNKCCCT.

Residues 1–27 (MAITKTSVTLLLLIIMAASLSNFSVLA) form the signal peptide. 4 cysteine pairs are disulfide-bonded: C40–C79, C44–C67, C53–C77, and C57–C78.

The protein belongs to the DEFL family.

The protein resides in the secreted. The protein is Defensin-like protein 44 of Arabidopsis thaliana (Mouse-ear cress).